The chain runs to 317 residues: Glucokinase (317 aa).

6–12 lines the ATP pocket; that stretch reads GVDIGGT.

Belongs to the ROK (NagC/XylR) family. In terms of assembly, homooligomer (possibly a homotetramer). Alternatively, it may form a heterotetramer of two glucokinase subunits with two ORF2 (AC P40182) proteins.

The protein resides in the cytoplasm. It carries out the reaction D-glucose + ATP = D-glucose 6-phosphate + ADP + H(+). In terms of biological role, a probable glucose kinase. Required for glucose repression of many different genes, restores glucose kinase activity in E.coli glk mutants. The chain is Glucokinase (glkA) from Streptomyces coelicolor (strain ATCC BAA-471 / A3(2) / M145).